A 256-amino-acid chain; its full sequence is Pimeloyl-[acyl-carrier protein] methyl ester esterase (256 aa).

One can recognise an AB hydrolase-1 domain in the interval 15–242 (HLVLLHGWGL…AAHAPFISHP (228 aa)). Residues Trp22, 82–83 (SL), and 143–147 (FLALQ) each bind substrate. Residue Ser82 is the Nucleophile of the active site. Residues Asp207 and His235 contribute to the active site. Position 235 (His235) interacts with substrate.

Belongs to the AB hydrolase superfamily. Carboxylesterase BioH family. Monomer.

It localises to the cytoplasm. The catalysed reaction is 6-carboxyhexanoyl-[ACP] methyl ester + H2O = 6-carboxyhexanoyl-[ACP] + methanol + H(+). It participates in cofactor biosynthesis; biotin biosynthesis. In terms of biological role, the physiological role of BioH is to remove the methyl group introduced by BioC when the pimeloyl moiety is complete. It allows to synthesize pimeloyl-ACP via the fatty acid synthetic pathway through the hydrolysis of the ester bonds of pimeloyl-ACP esters. The sequence is that of Pimeloyl-[acyl-carrier protein] methyl ester esterase from Escherichia coli (strain 55989 / EAEC).